A 96-amino-acid chain; its full sequence is Teretoxin Tan6.14 (96 aa).

A signal peptide spans 1–21; sequence MRPLLVFVLMVSVSLAFSLEG. Residues 22 to 60 constitute a propeptide that is removed on maturation; sequence MPNNGGDSVASITANQARRFKRNPLFSFAQHSLVDLKAR.

Post-translationally, contains 3 disulfide bonds. As to expression, expressed by the venom duct.

The protein localises to the secreted. The protein is Teretoxin Tan6.14 of Terebra anilis (Auger snail).